A 125-amino-acid polypeptide reads, in one-letter code: Small ribosomal subunit protein uS13 (125 aa).

The protein belongs to the universal ribosomal protein uS13 family. Part of the 30S ribosomal subunit. Forms a loose heterodimer with protein S19. Forms two bridges to the 50S subunit in the 70S ribosome.

In terms of biological role, located at the top of the head of the 30S subunit, it contacts several helices of the 16S rRNA. In the 70S ribosome it contacts the 23S rRNA (bridge B1a) and protein L5 of the 50S subunit (bridge B1b), connecting the 2 subunits; these bridges are implicated in subunit movement. Contacts the tRNAs in the A and P-sites. The polypeptide is Small ribosomal subunit protein uS13 (Rickettsia typhi (strain ATCC VR-144 / Wilmington)).